Reading from the N-terminus, the 145-residue chain is 3-dehydroquinate dehydratase (145 aa).

The Proton acceptor role is filled by Y23. N75, H81, and D88 together coordinate substrate. H101 acts as the Proton donor in catalysis. Residues I102–S103 and R112 contribute to the substrate site.

Belongs to the type-II 3-dehydroquinase family. As to quaternary structure, homododecamer.

It catalyses the reaction 3-dehydroquinate = 3-dehydroshikimate + H2O. The protein operates within metabolic intermediate biosynthesis; chorismate biosynthesis; chorismate from D-erythrose 4-phosphate and phosphoenolpyruvate: step 3/7. In terms of biological role, catalyzes a trans-dehydration via an enolate intermediate. The protein is 3-dehydroquinate dehydratase of Caldicellulosiruptor saccharolyticus (strain ATCC 43494 / DSM 8903 / Tp8T 6331).